The sequence spans 197 residues: Nucleoid occlusion factor SlmA (197 aa).

In terms of domain architecture, HTH tetR-type spans 7–67 (INRREHILQC…GLIEFIEESL (61 aa)). Residues 30–49 (TTAKLASEVGVSEAALYRHF) constitute a DNA-binding region (H-T-H motif).

The protein belongs to the nucleoid occlusion factor SlmA family. Homodimer. Interacts with FtsZ.

Its subcellular location is the cytoplasm. It localises to the nucleoid. Functionally, required for nucleoid occlusion (NO) phenomenon, which prevents Z-ring formation and cell division over the nucleoid. Acts as a DNA-associated cell division inhibitor that binds simultaneously chromosomal DNA and FtsZ, and disrupts the assembly of FtsZ polymers. SlmA-DNA-binding sequences (SBS) are dispersed on non-Ter regions of the chromosome, preventing FtsZ polymerization at these regions. The polypeptide is Nucleoid occlusion factor SlmA (Shewanella sp. (strain MR-7)).